We begin with the raw amino-acid sequence, 103 residues long: Putative ribosomal RNA-processing protein 7 homolog B (103 aa).

Residues 1–19 (MEAYDQKIAEEEAKAKEEE) are compositionally biased toward basic and acidic residues. Residues 1–25 (MEAYDQKIAEEEAKAKEEEGVPDEE) form a disordered region. Residues 71–100 (ESKMEHLAQLRKKFEEDKQRIELLRAQRKF) adopt a coiled-coil conformation.

This sequence belongs to the RRP7 family.

The protein is Putative ribosomal RNA-processing protein 7 homolog B of Homo sapiens (Human).